The chain runs to 214 residues: Reticulon-3-B (214 aa).

Positions 1–22 (MAETSGPQSSHISSSSAGDKGS) are disordered. The region spanning 26–214 (VRDLLYWRDV…LPGALKKKSE (189 aa)) is the Reticulon domain. Transmembrane regions (helical) follow at residues 46–66 (MVLL…YLVL) and 150–170 (TYIG…LLAF).

Homodimer.

The protein resides in the endoplasmic reticulum membrane. It localises to the golgi apparatus membrane. May be involved in membrane trafficking in the early secretory pathway. This is Reticulon-3-B (rtn3-b) from Xenopus laevis (African clawed frog).